Consider the following 100-residue polypeptide: UPF0298 protein lp_2135 (100 aa).

It belongs to the UPF0298 family.

The protein localises to the cytoplasm. The protein is UPF0298 protein lp_2135 of Lactiplantibacillus plantarum (strain ATCC BAA-793 / NCIMB 8826 / WCFS1) (Lactobacillus plantarum).